The chain runs to 333 residues: Lipoyl synthase (333 aa).

Over residues 1–15 the composition is skewed to polar residues; that stretch reads MSTLVESPVPSNDSQ. Positions 1–34 are disordered; the sequence is MSTLVESPVPSNDSQAAAPAAYDPTQKQKSQAKT. [4Fe-4S] cluster is bound by residues cysteine 80, cysteine 85, cysteine 91, cysteine 106, cysteine 110, cysteine 113, and serine 320. One can recognise a Radical SAM core domain in the interval 91 to 309; sequence CFGKGTATFM…EREAYAMGFT (219 aa).

This sequence belongs to the radical SAM superfamily. Lipoyl synthase family. [4Fe-4S] cluster is required as a cofactor.

The protein resides in the cytoplasm. The enzyme catalyses [[Fe-S] cluster scaffold protein carrying a second [4Fe-4S](2+) cluster] + N(6)-octanoyl-L-lysyl-[protein] + 2 oxidized [2Fe-2S]-[ferredoxin] + 2 S-adenosyl-L-methionine + 4 H(+) = [[Fe-S] cluster scaffold protein] + N(6)-[(R)-dihydrolipoyl]-L-lysyl-[protein] + 4 Fe(3+) + 2 hydrogen sulfide + 2 5'-deoxyadenosine + 2 L-methionine + 2 reduced [2Fe-2S]-[ferredoxin]. It functions in the pathway protein modification; protein lipoylation via endogenous pathway; protein N(6)-(lipoyl)lysine from octanoyl-[acyl-carrier-protein]: step 2/2. Catalyzes the radical-mediated insertion of two sulfur atoms into the C-6 and C-8 positions of the octanoyl moiety bound to the lipoyl domains of lipoate-dependent enzymes, thereby converting the octanoylated domains into lipoylated derivatives. The sequence is that of Lipoyl synthase from Bordetella parapertussis (strain 12822 / ATCC BAA-587 / NCTC 13253).